Here is a 458-residue protein sequence, read N- to C-terminus: Maturase-like protein 1 (458 aa).

This sequence to group II intron maturases.

The protein resides in the plastid. It localises to the chloroplast. Could be required for group III intron excision. The protein is Maturase-like protein 1 (mat1) of Euglena gracilis.